A 205-amino-acid polypeptide reads, in one-letter code: Imidazole glycerol phosphate synthase subunit HisH (205 aa).

The 205-residue stretch at 1–205 (MVGIVNYNIG…RILKNFCEIG (205 aa)) folds into the Glutamine amidotransferase type-1 domain. C79 functions as the Nucleophile in the catalytic mechanism. Active-site residues include H186 and E188.

As to quaternary structure, heterodimer of HisH and HisF.

The protein resides in the cytoplasm. The enzyme catalyses 5-[(5-phospho-1-deoxy-D-ribulos-1-ylimino)methylamino]-1-(5-phospho-beta-D-ribosyl)imidazole-4-carboxamide + L-glutamine = D-erythro-1-(imidazol-4-yl)glycerol 3-phosphate + 5-amino-1-(5-phospho-beta-D-ribosyl)imidazole-4-carboxamide + L-glutamate + H(+). It carries out the reaction L-glutamine + H2O = L-glutamate + NH4(+). It functions in the pathway amino-acid biosynthesis; L-histidine biosynthesis; L-histidine from 5-phospho-alpha-D-ribose 1-diphosphate: step 5/9. Functionally, IGPS catalyzes the conversion of PRFAR and glutamine to IGP, AICAR and glutamate. The HisH subunit catalyzes the hydrolysis of glutamine to glutamate and ammonia as part of the synthesis of IGP and AICAR. The resulting ammonia molecule is channeled to the active site of HisF. This chain is Imidazole glycerol phosphate synthase subunit HisH, found in Wolinella succinogenes (strain ATCC 29543 / DSM 1740 / CCUG 13145 / JCM 31913 / LMG 7466 / NCTC 11488 / FDC 602W) (Vibrio succinogenes).